Reading from the N-terminus, the 243-residue chain is 1-(5-phosphoribosyl)-5-[(5-phosphoribosylamino)methylideneamino] imidazole-4-carboxamide isomerase (243 aa).

Residue aspartate 8 is the Proton acceptor of the active site. The Proton donor role is filled by aspartate 130.

It belongs to the HisA/HisF family.

It localises to the cytoplasm. The catalysed reaction is 1-(5-phospho-beta-D-ribosyl)-5-[(5-phospho-beta-D-ribosylamino)methylideneamino]imidazole-4-carboxamide = 5-[(5-phospho-1-deoxy-D-ribulos-1-ylimino)methylamino]-1-(5-phospho-beta-D-ribosyl)imidazole-4-carboxamide. It functions in the pathway amino-acid biosynthesis; L-histidine biosynthesis; L-histidine from 5-phospho-alpha-D-ribose 1-diphosphate: step 4/9. This chain is 1-(5-phosphoribosyl)-5-[(5-phosphoribosylamino)methylideneamino] imidazole-4-carboxamide isomerase, found in Vesicomyosocius okutanii subsp. Calyptogena okutanii (strain HA).